A 297-amino-acid polypeptide reads, in one-letter code: 4-diphosphocytidyl-2-C-methyl-D-erythritol kinase (297 aa).

Lys22 is a catalytic residue. 111-121 is an ATP binding site; it reads PSQAGMGGGSS. The active site involves Asp153.

The protein belongs to the GHMP kinase family. IspE subfamily.

The enzyme catalyses 4-CDP-2-C-methyl-D-erythritol + ATP = 4-CDP-2-C-methyl-D-erythritol 2-phosphate + ADP + H(+). It participates in isoprenoid biosynthesis; isopentenyl diphosphate biosynthesis via DXP pathway; isopentenyl diphosphate from 1-deoxy-D-xylulose 5-phosphate: step 3/6. Catalyzes the phosphorylation of the position 2 hydroxy group of 4-diphosphocytidyl-2C-methyl-D-erythritol. This chain is 4-diphosphocytidyl-2-C-methyl-D-erythritol kinase, found in Polaromonas naphthalenivorans (strain CJ2).